The primary structure comprises 414 residues: uncharacterized protein (414 aa).

The signal sequence occupies residues 1–20 (MKKLLAIGILCIMVTAVMSG). A lipid anchor (S-archaeol cysteine) is attached at Cys-21. The Fe/B12 periplasmic-binding domain occupies 119–389 (RVIVMSSTEI…DLATILHPEA (271 aa)).

It localises to the cell membrane. This is an uncharacterized protein from Methanocaldococcus jannaschii (strain ATCC 43067 / DSM 2661 / JAL-1 / JCM 10045 / NBRC 100440) (Methanococcus jannaschii).